The sequence spans 129 residues: Histone H2B.1 (129 aa).

The segment covering 1–17 has biased composition (basic and acidic residues); sequence MSAEKKPASKAPAEKKP. The disordered stretch occupies residues 1–35; that stretch reads MSAEKKPASKAPAEKKPAAKKTAPSADGKKRTKAR. 2 positions are modified to N6-acetyllysine; alternate: K5 and K6. Residues K5 and K6 each participate in a glycyl lysine isopeptide (Lys-Gly) (interchain with G-Cter in SUMO); alternate cross-link. At S9 the chain carries Phosphoserine. K10 is modified (N6-acetyllysine). K15 is subject to N6-acetyllysine; alternate. K15 is covalently cross-linked (Glycyl lysine isopeptide (Lys-Gly) (interchain with G-Cter in SUMO); alternate). Residue K16 forms a Glycyl lysine isopeptide (Lys-Gly) (interchain with G-Cter in SUMO) linkage. K122 is covalently cross-linked (Glycyl lysine isopeptide (Lys-Gly) (interchain with G-Cter in ubiquitin)).

Belongs to the histone H2B family. The nucleosome is a histone octamer containing two molecules each of H2A, H2B, H3 and H4 assembled in one H3-H4 heterotetramer and two H2A-H2B heterodimers. The octamer wraps approximately 147 bp of DNA. In terms of processing, monoubiquitinated by the UBC2-BRE1 complex to form H2BK123ub1. H2BK123ub1 gives a specific tag for epigenetic transcriptional activation and is also prerequisite for H3K4me and H3K79me formation. H2BK123ub1 also modulates the formation of double-strand breaks during meiosis and is a prerequisite for DNA-damage checkpoint activation. Post-translationally, phosphorylated by STE20 to form H2BS10ph during progression through meiotic prophase. May be correlated with chromosome condensation. Acetylated by GCN5 to form H2BK11ac and H2BK16ac. H2BK16ac can also be formed by ESA1. Acetylation of N-terminal lysines and particularly formation of H2BK11acK16ac has a positive effect on transcription. In terms of processing, sumoylation to form H2BK6su or H2BK7su, and probably also H2BK16su or H2BK17su, occurs preferentially near the telomeres and represses gene transcription.

The protein localises to the nucleus. Its subcellular location is the chromosome. Functionally, core component of nucleosome. Nucleosomes wrap and compact DNA into chromatin, limiting DNA accessibility to the cellular machineries which require DNA as a template. Histones thereby play a central role in transcription regulation, DNA repair, DNA replication and chromosomal stability. DNA accessibility is regulated via a complex set of post-translational modifications of histones, also called histone code, and nucleosome remodeling. This is Histone H2B.1 (HTB1) from Candida glabrata (strain ATCC 2001 / BCRC 20586 / JCM 3761 / NBRC 0622 / NRRL Y-65 / CBS 138) (Yeast).